The primary structure comprises 231 residues: PX domain-containing protein 1 (231 aa).

The PX domain maps to 1–134 (MASAVFEGTS…TFFERSPLDQ (134 aa)).

The sequence is that of PX domain-containing protein 1 (PXDC1) from Homo sapiens (Human).